The primary structure comprises 185 residues: Elongation factor P (185 aa).

The protein belongs to the elongation factor P family.

The protein resides in the cytoplasm. It participates in protein biosynthesis; polypeptide chain elongation. Functionally, involved in peptide bond synthesis. Stimulates efficient translation and peptide-bond synthesis on native or reconstituted 70S ribosomes in vitro. Probably functions indirectly by altering the affinity of the ribosome for aminoacyl-tRNA, thus increasing their reactivity as acceptors for peptidyl transferase. This is Elongation factor P from Bacillus mycoides (strain KBAB4) (Bacillus weihenstephanensis).